The chain runs to 395 residues: Protochlorophyllide reductase B, chloroplastic (395 aa).

Residues 1 to 59 (MALQAATSFLPSALSARKEGAAKDSAFFGVRLADGLKLDATSLGLRTKRVNTSSVAIRA) constitute a chloroplast transit peptide.

It belongs to the short-chain dehydrogenases/reductases (SDR) family. POR subfamily.

The protein resides in the plastid. It localises to the chloroplast. The enzyme catalyses chlorophyllide a + NADP(+) = protochlorophyllide a + NADPH + H(+). It functions in the pathway porphyrin-containing compound metabolism; chlorophyll biosynthesis. Phototransformation of protochlorophyllide (Pchlide) to chlorophyllide (Chlide). The sequence is that of Protochlorophyllide reductase B, chloroplastic (PORB) from Hordeum vulgare (Barley).